Reading from the N-terminus, the 68-residue chain is DNA-directed RNA polymerase subunit Rpo10 (68 aa).

C7, C10, C44, and C45 together coordinate Zn(2+).

The protein belongs to the archaeal Rpo10/eukaryotic RPB10 RNA polymerase subunit family. Part of the RNA polymerase complex. Zn(2+) is required as a cofactor.

Its subcellular location is the cytoplasm. The enzyme catalyses RNA(n) + a ribonucleoside 5'-triphosphate = RNA(n+1) + diphosphate. Its function is as follows. DNA-dependent RNA polymerase (RNAP) catalyzes the transcription of DNA into RNA using the four ribonucleoside triphosphates as substrates. In Methanococcus maripaludis (strain C7 / ATCC BAA-1331), this protein is DNA-directed RNA polymerase subunit Rpo10.